The following is a 611-amino-acid chain: Threonine--tRNA ligase (611 aa).

The segment at 1–25 (MAGPDRKPVSSAAATTPAPSAPVVL) is disordered. Residues 9–24 (VSSAAATTPAPSAPVV) show a composition bias toward low complexity. The interval 209 to 502 (DHRRIGKDLD…MTENYAGDYP (294 aa)) is catalytic. Residues Cys-302, His-353, and His-479 each coordinate Zn(2+).

The protein belongs to the class-II aminoacyl-tRNA synthetase family. As to quaternary structure, homodimer. Requires Zn(2+) as cofactor.

Its subcellular location is the cytoplasm. The catalysed reaction is tRNA(Thr) + L-threonine + ATP = L-threonyl-tRNA(Thr) + AMP + diphosphate + H(+). Catalyzes the attachment of threonine to tRNA(Thr) in a two-step reaction: L-threonine is first activated by ATP to form Thr-AMP and then transferred to the acceptor end of tRNA(Thr). Also edits incorrectly charged L-seryl-tRNA(Thr). This Parasynechococcus marenigrum (strain WH8102) protein is Threonine--tRNA ligase.